The following is a 473-amino-acid chain: H(+)/Cl(-) exchange transporter ClcA (473 aa).

The Cytoplasmic segment spans residues 1-32; sequence MKTDTSTFLAQQIVRLRRRDQIRRLMQRDKTP. A helical transmembrane segment spans residues 33–69; that stretch reads LAILFMAAVVGTLTGLVGVAFEKAVSWVQNMRIGALV. At 70 to 76 the chain is on the periplasmic side; the sequence is QVADHAF. The helical transmembrane segment at 77-100 threads the bilayer; that stretch reads LLWPLAFILSALLAMVGYFLVRKF. The short motif at 106-110 is the Selectivity filter part_1 element; the sequence is GSGIP. Ser107 provides a ligand contact to chloride. The helical intramembrane region spans 109-116; the sequence is IPEIEGAL. Residues 117–123 lie on the Cytoplasmic side of the membrane; it reads EELRPVR. The next 2 helical transmembrane spans lie at 124–141 and 148–166; these read WWRV…TLGA and EGPT…LDVF. The short motif at 146–150 is the Selectivity filter part_2 element; it reads GREGP. Residues 167 to 176 lie on the Cytoplasmic side of the membrane; the sequence is RMRSAEARHT. 2 intramembrane regions (helical) span residues 177 to 189 and 193 to 201; these read LLAT…LSAA and PLAGILFII. Topologically, residues 202–214 are cytoplasmic; it reads EEMRPQFRYNLIS. A helical membrane pass occupies residues 215–232; that stretch reads IKAVFTGVIMSSIVFRIF. Over 233–252 the chain is Periplasmic; sequence NGEAPIIEVGKLSDAPVNTL. A helical transmembrane segment spans residues 253–281; that stretch reads WLYLILGIIFGCVGPVFNSLVLRTQDMFQ. The Cytoplasmic portion of the chain corresponds to 282–287; sequence RFHGGE. The chain crosses the membrane as a helical span at residues 288–309; it reads IKKWVLMGGAIGGLCGILGLIE. Residues 310-329 lie on the Periplasmic side of the membrane; that stretch reads PEAAGGGFNLIPIAAAGNFS. Transmembrane regions (helical) follow at residues 330-349 and 355-376; these read VGLL…LCFS and GIFA…MAAA. The Selectivity filter part_3 motif lies at 355–359; the sequence is GIFAP. The chloride site is built by Ile356 and Phe357. Residues 377–386 lie on the Periplasmic side of the membrane; the sequence is VLFPQYHLEA. An intramembrane region (helical) is located at residues 387–401; that stretch reads GTFAIAGMGALMAAS. Positions 402-404 form an intramembrane region, note=Loop between two helices; the sequence is VRA. The segment at residues 405-416 is an intramembrane region (helical); sequence PLTGIVLVLEMT. The note=Loop between two helices intramembrane region spans 417–421; it reads DNYQL. A helical membrane pass occupies residues 422–438; it reads ILPMIITCLGATLLAQF. Over 439–473 the chain is Cytoplasmic; that stretch reads LGGKPLYSTILARTLAKQDAEQAAKSQNAPAGENT. Tyr445 serves as a coordination point for chloride.

Belongs to the chloride channel (TC 2.A.49) family. ClcA subfamily. In terms of assembly, homodimer.

The protein resides in the cell inner membrane. It catalyses the reaction 2 chloride(in) + H(+)(out) = 2 chloride(out) + H(+)(in). Functionally, proton-coupled chloride transporter. Functions as antiport system and exchanges two chloride ions for 1 proton. Probably acts as an electrical shunt for an outwardly-directed proton pump that is linked to amino acid decarboxylation, as part of the extreme acid resistance (XAR) response. This chain is H(+)/Cl(-) exchange transporter ClcA, found in Salmonella gallinarum (strain 287/91 / NCTC 13346).